The sequence spans 224 residues: Viral late gene transcription factor 3 (224 aa).

The protein belongs to the orthopoxvirus VLTF-3/OPG127 family. Interacts with the late transcription elongation factor VLTF-4/OPG110. Interacts with the late transcription factors VLTF-1/OPG093.

Its function is as follows. Acts with RNA polymerase to initiate transcription from late gene promoters. The chain is Viral late gene transcription factor 3 (OPG127) from Monkeypox virus.